Reading from the N-terminus, the 537-residue chain is Sodium/hydrogen exchanger 9B2 (537 aa).

The segment covering 1–10 (MGDEDKRITY) has biased composition (basic and acidic residues). A disordered region spans residues 1-28 (MGDEDKRITYEDSEPSTGMNYTPSMHQE). Over 1–86 (MGDEDKRITY…ACPPHGLLDR (86 aa)) the chain is Cytoplasmic. A compositionally biased stretch (polar residues) spans 15–27 (PSTGMNYTPSMHQ). Serine 49 is modified (phosphoserine). The chain crosses the membrane as a helical span at residues 87–104 (VITNVTIIVLLWAVVWSI). Over 105–113 (TGSECLPGG) the chain is Extracellular. The chain crosses the membrane as a helical span at residues 114–133 (NLFGIIILFYCAIIGGKLLG). At 134 to 144 (LIKLPTLPPLP) the chain is on the cytoplasmic side. The helical transmembrane segment at 145-161 (SLLGMLLAGFLIRNIPV) threads the bilayer. Residues 162–171 (INDNVQIKHK) lie on the Extracellular side of the membrane. A helical membrane pass occupies residues 172-189 (WSSSLRSIALSIILVRAG). Residues 190–200 (LGLDSKALKKL) lie on the Cytoplasmic side of the membrane. A helical transmembrane segment spans residues 201 to 227 (KGVCVRLSMGPCIVEACTSALLAHYLL). Residues 228 to 233 (GLPWQW) are Extracellular-facing. The helical transmembrane segment at 234–242 (GFILGFVLG) threads the bilayer. The Cytoplasmic segment spans residues 243-270 (AVSPAVVVPSMLLLQGGGYGVEKGVPTL). Residues valine 244, glycine 275, aspartate 278, and aspartate 279 each coordinate Na(+). A helical transmembrane segment spans residues 271 to 290 (LMAAGSFDDILAITGFNTCL). Residues 291–300 (GIAFSTGSTV) are Extracellular-facing. A helical transmembrane segment spans residues 301–324 (FNVLRGVLEVVIGVATGSVLGFFI). Topologically, residues 325 to 339 (QYFPSRDQDKLVCKR) are cytoplasmic. The helical transmembrane segment at 340 to 357 (TFLVLGLSVLAVFSSVHF) threads the bilayer. Residues 358 to 361 (GFPG) are Extracellular-facing. A helical transmembrane segment spans residues 362 to 373 (SGGLCTLVMAFL). Residues 374-390 (AGMGWTSEKAEVEKIIA) lie on the Cytoplasmic side of the membrane. Residues 391-411 (VAWDIFQPLLFGLIGAEVSIA) form a helical membrane-spanning segment. Over 412-417 (SLRPET) the chain is Extracellular. The helical transmembrane segment at 418–440 (VGLCVATVGIAVLIRILTTFLMV) threads the bilayer. Topologically, residues 441-461 (CFAGFNLKEKIFISFAWLPKA) are cytoplasmic. A helical membrane pass occupies residues 462 to 473 (TVQAAIGSVALD). Topologically, residues 474-486 (TARSHGEKQLEDY) are extracellular. A helical transmembrane segment spans residues 487 to 509 (GMDVLTVAFLSILITAPIGSLLI). The Cytoplasmic portion of the chain corresponds to 510 to 537 (GLLGPRLLQKVEHQNKDEEVQGETSVQV).

This sequence belongs to the monovalent cation:proton antiporter 1 (CPA1) transporter (TC 2.A.36) family. Homodimer. Dimerization is essential for SLC9B2 activity. Lipids seem to play a role in the stabilization of the dimerization subdomain. In terms of tissue distribution, widely expressed. High levels detected in the distal tubules of the kidney nephron. Detected in red blood cells (at protein level).

It is found in the cell membrane. Its subcellular location is the mitochondrion membrane. The protein localises to the endosome membrane. The protein resides in the recycling endosome membrane. It localises to the cytoplasmic vesicle. It is found in the secretory vesicle. Its subcellular location is the synaptic vesicle membrane. The protein localises to the cell projection. The protein resides in the cilium. It localises to the flagellum membrane. It is found in the basolateral cell membrane. Its subcellular location is the apical cell membrane. It carries out the reaction Li(+)(out) + H(+)(in) = Li(+)(in) + H(+)(out). It catalyses the reaction Li(+)(in) + Na(+)(out) = Li(+)(out) + Na(+)(in). The catalysed reaction is Na(+)(in) + H(+)(out) = Na(+)(out) + H(+)(in). With respect to regulation, allosterically inhibited by the N-terminal domain. Inhibited by phloretin. Its function is as follows. Electroneutral Na(+) Li(+)/H(+) antiporter that extrudes Na(+) or Li(+) in exchange for external protons across the membrane. Uses the proton gradient/membrane potential to extrude sodium. Contributes to the regulation of intracellular pH and sodium homeostasis. Also able to mediate Na(+)/Li(+) antiporter activity in kidney. May play a physiological role in renal tubular function and blood pressure homeostasis. Plays an important role for insulin secretion and clathrin-mediated endocytosis in beta-cells. Involved in sperm motility and fertility. It is controversial whether SLC9B2 plays a role in osteoclast differentiation or not. The chain is Sodium/hydrogen exchanger 9B2 from Homo sapiens (Human).